A 133-amino-acid polypeptide reads, in one-letter code: Small ribosomal subunit protein uS8 (133 aa).

This sequence belongs to the universal ribosomal protein uS8 family. Part of the 30S ribosomal subunit. Contacts proteins S5 and S12.

Its function is as follows. One of the primary rRNA binding proteins, it binds directly to 16S rRNA central domain where it helps coordinate assembly of the platform of the 30S subunit. This chain is Small ribosomal subunit protein uS8, found in Parasynechococcus marenigrum (strain WH8102).